The chain runs to 416 residues: Adenosylhomocysteinase (416 aa).

Residues Thr-55, Asp-126, and Glu-151 each coordinate substrate. NAD(+) is bound at residue 152 to 154 (TTT). Substrate contacts are provided by Lys-181 and Asp-185. Residues Asn-186, 215–220 (GYGWVG), Glu-238, Asn-273, 294–296 (AGH), and Asn-341 each bind NAD(+).

The protein belongs to the adenosylhomocysteinase family. NAD(+) is required as a cofactor.

It is found in the cytoplasm. The catalysed reaction is S-adenosyl-L-homocysteine + H2O = L-homocysteine + adenosine. The protein operates within amino-acid biosynthesis; L-homocysteine biosynthesis; L-homocysteine from S-adenosyl-L-homocysteine: step 1/1. May play a key role in the regulation of the intracellular concentration of adenosylhomocysteine. The protein is Adenosylhomocysteinase of Aeropyrum pernix (strain ATCC 700893 / DSM 11879 / JCM 9820 / NBRC 100138 / K1).